The sequence spans 193 residues: MGSQWSRDKVYLRAKHEGFRSRASYKLIEIQEKFAVIRRDDNIIDLGAAPGSWLQVLRTLTDGRVLGIDLNPIADIEGIETLEGDLTDPVVQKQAKEMLGTVCIVVCDAAPKLSGHKSYDQARAIALGEEALLFACNVLKPGGNFVIKSFQGADFPELLAAIQGQFYAVKTYSTKATRKGSTEIYIIAKNFKG.

S-adenosyl-L-methionine is bound by residues G51, W53, D69, D85, and D108. Residue K148 is the Proton acceptor of the active site.

The protein belongs to the class I-like SAM-binding methyltransferase superfamily. RNA methyltransferase RlmE family.

The protein resides in the cytoplasm. It carries out the reaction uridine(2552) in 23S rRNA + S-adenosyl-L-methionine = 2'-O-methyluridine(2552) in 23S rRNA + S-adenosyl-L-homocysteine + H(+). In terms of biological role, specifically methylates the uridine in position 2552 of 23S rRNA at the 2'-O position of the ribose in the fully assembled 50S ribosomal subunit. In Methanoregula boonei (strain DSM 21154 / JCM 14090 / 6A8), this protein is Ribosomal RNA large subunit methyltransferase E.